The following is a 181-amino-acid chain: ADP-ribosylation factor 1 (181 aa).

G2 carries N-myristoyl glycine lipidation. Residues 25–32 (LDGAGKTT), T48, G70, 126–129 (NKQD), and 160–161 (AT) contribute to the GTP site. K127 participates in a covalent cross-link: Glycyl lysine isopeptide (Lys-Gly) (interchain with G-Cter in ubiquitin).

This sequence belongs to the small GTPase superfamily. Arf family. Interacts with RUD3. Interacts with VPS13 (via C-terminal part); the interaction is direct.

It localises to the golgi apparatus. The enzyme catalyses GTP + H2O = GDP + phosphate + H(+). Its function is as follows. GTP-binding protein involved in Golgi vesicle trafficking. May modulate vesicle budding and uncoating within the Golgi apparatus. May recruit the lipid transfer protein VPS13 to Golgi membranes. Recruits polyadenylate-binding protein PAB1 to COPI vesicles, and this is required for correct localization of the asymmetrically distributed ASH1 mRNA. The chain is ADP-ribosylation factor 1 (ARF1) from Saccharomyces cerevisiae (strain ATCC 204508 / S288c) (Baker's yeast).